A 25-amino-acid polypeptide reads, in one-letter code: Defensin D3 (25 aa).

The protein belongs to the DEFL family. Group IV subfamily. In terms of tissue distribution, distributed in the epidermal cell layer of leaves and in the subepidermal layer region of stems. Not in roots.

It localises to the secreted. The protein resides in the cell wall. Its function is as follows. Antimicrobial peptide. Active against Fusarium spp., Gram-positive and Gram-negative bacterial pathogens. This Spinacia oleracea (Spinach) protein is Defensin D3.